Here is a 443-residue protein sequence, read N- to C-terminus: ATP-dependent protease ATPase subunit HslU (443 aa).

ATP contacts are provided by residues Ile18, 60–65 (GVGKTE), Asp256, Glu321, and Arg393.

The protein belongs to the ClpX chaperone family. HslU subfamily. As to quaternary structure, a double ring-shaped homohexamer of HslV is capped on each side by a ring-shaped HslU homohexamer. The assembly of the HslU/HslV complex is dependent on binding of ATP.

The protein resides in the cytoplasm. Its function is as follows. ATPase subunit of a proteasome-like degradation complex; this subunit has chaperone activity. The binding of ATP and its subsequent hydrolysis by HslU are essential for unfolding of protein substrates subsequently hydrolyzed by HslV. HslU recognizes the N-terminal part of its protein substrates and unfolds these before they are guided to HslV for hydrolysis. In Yersinia pestis bv. Antiqua (strain Antiqua), this protein is ATP-dependent protease ATPase subunit HslU.